We begin with the raw amino-acid sequence, 360 residues long: Phospho-N-acetylmuramoyl-pentapeptide-transferase (360 aa).

10 helical membrane-spanning segments follow: residues glycine 27–leucine 47, valine 69–methionine 89, tryptophan 93–phenylalanine 113, leucine 134–alanine 154, valine 168–alanine 188, glycine 199–valine 219, isoleucine 239–proline 259, alanine 262–isoleucine 282, leucine 288–valine 308, and threonine 337–leucine 357.

This sequence belongs to the glycosyltransferase 4 family. MraY subfamily. Mg(2+) serves as cofactor.

The protein localises to the cell inner membrane. The enzyme catalyses UDP-N-acetyl-alpha-D-muramoyl-L-alanyl-gamma-D-glutamyl-meso-2,6-diaminopimeloyl-D-alanyl-D-alanine + di-trans,octa-cis-undecaprenyl phosphate = di-trans,octa-cis-undecaprenyl diphospho-N-acetyl-alpha-D-muramoyl-L-alanyl-D-glutamyl-meso-2,6-diaminopimeloyl-D-alanyl-D-alanine + UMP. Its pathway is cell wall biogenesis; peptidoglycan biosynthesis. In terms of biological role, catalyzes the initial step of the lipid cycle reactions in the biosynthesis of the cell wall peptidoglycan: transfers peptidoglycan precursor phospho-MurNAc-pentapeptide from UDP-MurNAc-pentapeptide onto the lipid carrier undecaprenyl phosphate, yielding undecaprenyl-pyrophosphoryl-MurNAc-pentapeptide, known as lipid I. This is Phospho-N-acetylmuramoyl-pentapeptide-transferase from Ruegeria sp. (strain TM1040) (Silicibacter sp.).